The primary structure comprises 193 residues: Interleukin-18-binding protein (193 aa).

An N-terminal signal peptide occupies residues 1 to 28 (MTMRHCWTAGPSSWWVLLLYVHVILARA). The region spanning 60-161 (PALDVIWPEK…QVAQYHIILA (102 aa)) is the Ig-like C2-type domain. N-linked (GlcNAc...) asparagine glycosylation is found at Asn74, Asn98, Asn120, and Asn142. Cysteines 81 and 145 form a disulfide. The segment covering 172-185 (SPSQETLSSHSPVS) has biased composition (polar residues). A disordered region spans residues 172–193 (SPSQETLSSHSPVSRSAGPGVA).

The protein resides in the secreted. Functionally, binds to IL-18 and inhibits its activity. Functions as an inhibitor of the early TH1 cytokine response. This chain is Interleukin-18-binding protein (Il18bp), found in Mus musculus (Mouse).